The following is a 312-amino-acid chain: Glyoxylate/hydroxypyruvate reductase A (312 aa).

Arg-227 is a catalytic residue. His-275 serves as the catalytic Proton donor.

This sequence belongs to the D-isomer specific 2-hydroxyacid dehydrogenase family. GhrA subfamily.

The protein resides in the cytoplasm. The catalysed reaction is glycolate + NADP(+) = glyoxylate + NADPH + H(+). The enzyme catalyses (R)-glycerate + NAD(+) = 3-hydroxypyruvate + NADH + H(+). It catalyses the reaction (R)-glycerate + NADP(+) = 3-hydroxypyruvate + NADPH + H(+). Its function is as follows. Catalyzes the NADPH-dependent reduction of glyoxylate and hydroxypyruvate into glycolate and glycerate, respectively. This is Glyoxylate/hydroxypyruvate reductase A from Escherichia coli O81 (strain ED1a).